The primary structure comprises 488 residues: H2.0-like homeobox protein (488 aa).

Disordered stretches follow at residues 118 to 173 and 331 to 488; these read AYHH…SSKD and WRHS…LGCL. Low complexity-rich tracts occupy residues 125–135 and 158–171; these read QQQQQQQQPQQ and PNPHHSGSAPAPSS. Positions 276–335 form a DNA-binding region, homeobox; sequence RSWSRAVFSNLQRKGLEKRFEIQKYVTKPDRKQLAAMLGLTDAQVKVWFQNRRMKWRHSK. 2 stretches are compositionally biased toward basic and acidic residues: residues 334 to 349 and 363 to 372; these read SKEAQAQKDKDKEAGE and DERSPSRSEG. Residues 373 to 383 show a composition bias toward acidic residues; sequence EAESESSDSES. Positions 390–401 are enriched in basic and acidic residues; sequence DTERTEGSERSL. Residues 422 to 432 show a composition bias toward gly residues; the sequence is GSGGSSGGGGN. A compositionally biased stretch (low complexity) spans 433-454; it reads SFSFSSASSLSSSSTSAGCASS.

Belongs to the H2.0 homeobox family. Low level in normal B and T-cells, high level in activated lymphocytes and monocytes. Also found in thymus, tonsil, bone marrow, developing vessels, and fetal brain.

The protein resides in the nucleus. In terms of biological role, transcription factor required for TBX21/T-bet-dependent maturation of Th1 cells as well as maintenance of Th1-specific gene expression. Involved in embryogenesis and hematopoiesis. The sequence is that of H2.0-like homeobox protein (HLX) from Homo sapiens (Human).